The following is a 782-amino-acid chain: Endonuclease MutS2 (782 aa).

336–343 (GPNTGGKT) provides a ligand contact to ATP. Residues 707 to 782 (LDLRGYRYED…GFGVTVATLK (76 aa)) form the Smr domain.

This sequence belongs to the DNA mismatch repair MutS family. MutS2 subfamily. Homodimer. Binds to stalled ribosomes, contacting rRNA.

In terms of biological role, endonuclease that is involved in the suppression of homologous recombination and thus may have a key role in the control of bacterial genetic diversity. Its function is as follows. Acts as a ribosome collision sensor, splitting the ribosome into its 2 subunits. Detects stalled/collided 70S ribosomes which it binds and splits by an ATP-hydrolysis driven conformational change. Acts upstream of the ribosome quality control system (RQC), a ribosome-associated complex that mediates the extraction of incompletely synthesized nascent chains from stalled ribosomes and their subsequent degradation. Probably generates substrates for RQC. This is Endonuclease MutS2 from Staphylococcus aureus (strain Mu50 / ATCC 700699).